The following is a 605-amino-acid chain: Exo-beta-1,3-glucanase (605 aa).

Residues 1-23 (MHVPPTDPARSAPPASPHRRRRP) form a disordered region. The signal sequence occupies residues 1-44 (MHVPPTDPARSAPPASPHRRRRPKALGLTALAAAMLMAVPTTQA). Substrate is bound by residues glutamine 174, 194 to 196 (YGW), glutamine 217, 446 to 449 (WRAD), and 480 to 481 (EH). The Proton donor role is filled by glutamate 502. Tyrosine 505 contributes to the substrate binding site.

It belongs to the glycosyl hydrolase 55 family.

Its subcellular location is the secreted. It carries out the reaction Successive hydrolysis of beta-D-glucose units from the non-reducing ends of (1-&gt;3)-beta-D-glucans, releasing alpha-glucose.. Functionally, exo-beta-1,3-glucanase that specifically hydrolyzes laminarin and laminarioligosaccharides, producing glucose and laminaribiose as end products. This chain is Exo-beta-1,3-glucanase, found in Streptomyces sp. (strain SirexAA-E / ActE).